Consider the following 404-residue polypeptide: Cysteine desulfurase IscS (404 aa).

Residues 75–76 (AT), asparagine 155, glutamine 183, and 203–205 (SAH) each bind pyridoxal 5'-phosphate. The residue at position 206 (lysine 206) is an N6-(pyridoxal phosphate)lysine. Threonine 243 provides a ligand contact to pyridoxal 5'-phosphate. The Cysteine persulfide intermediate role is filled by cysteine 328. Cysteine 328 contacts [2Fe-2S] cluster.

Belongs to the class-V pyridoxal-phosphate-dependent aminotransferase family. NifS/IscS subfamily. Homodimer. Forms a heterotetramer with IscU, interacts with other sulfur acceptors. It depends on pyridoxal 5'-phosphate as a cofactor.

The protein localises to the cytoplasm. It carries out the reaction (sulfur carrier)-H + L-cysteine = (sulfur carrier)-SH + L-alanine. It participates in cofactor biosynthesis; iron-sulfur cluster biosynthesis. Master enzyme that delivers sulfur to a number of partners involved in Fe-S cluster assembly, tRNA modification or cofactor biosynthesis. Catalyzes the removal of elemental sulfur atoms from cysteine to produce alanine. Functions as a sulfur delivery protein for Fe-S cluster synthesis onto IscU, an Fe-S scaffold assembly protein, as well as other S acceptor proteins. This is Cysteine desulfurase IscS from Pseudomonas putida (strain ATCC 700007 / DSM 6899 / JCM 31910 / BCRC 17059 / LMG 24140 / F1).